We begin with the raw amino-acid sequence, 287 residues long: uncharacterized protein (287 aa).

Residues 1–44 (MAAPRNLTGDGGARQLVKDEESPAASSAAKGLLNDDSPTGKRTK) form a disordered region. The residue at position 37 (Ser-37) is a Phosphoserine. 5 helical membrane passes run 55 to 75 (FAVF…IYLT), 124 to 144 (TFMI…FGVV), 147 to 167 (FVLV…LSKL), 218 to 238 (PIVD…LMPA), and 260 to 280 (DFKT…PALL).

It is found in the membrane. This is an uncharacterized protein from Arabidopsis thaliana (Mouse-ear cress).